Here is a 195-residue protein sequence, read N- to C-terminus: uncharacterized protein (195 aa).

2 consecutive transmembrane segments (helical) span residues 13 to 32 (VIGLWLPILVILILFAFLVA) and 42 to 64 (LSNSVVALATAIMASAALVTILV).

The protein localises to the cell membrane. This is an uncharacterized protein from Archaeoglobus fulgidus (strain ATCC 49558 / DSM 4304 / JCM 9628 / NBRC 100126 / VC-16).